A 309-amino-acid polypeptide reads, in one-letter code: HPr kinase/phosphorylase (309 aa).

Catalysis depends on residues His138 and Lys159. 153-160 (GDSGIGKS) serves as a coordination point for ATP. Ser160 contributes to the Mg(2+) binding site. The Proton acceptor; for phosphorylation activity. Proton donor; for dephosphorylation activity role is filled by Asp177. Residues 201 to 210 (LEIRGVGIID) form an important for the catalytic mechanism of both phosphorylation and dephosphorylation region. Residue Glu202 participates in Mg(2+) binding. The active site involves Arg243. The important for the catalytic mechanism of dephosphorylation stretch occupies residues 264–269 (PVKTGR).

It belongs to the HPrK/P family. In terms of assembly, homohexamer. Mg(2+) serves as cofactor.

The catalysed reaction is [HPr protein]-L-serine + ATP = [HPr protein]-O-phospho-L-serine + ADP + H(+). It catalyses the reaction [HPr protein]-O-phospho-L-serine + phosphate + H(+) = [HPr protein]-L-serine + diphosphate. Catalyzes the ATP- as well as the pyrophosphate-dependent phosphorylation of a specific serine residue in HPr, a phosphocarrier protein of the phosphoenolpyruvate-dependent sugar phosphotransferase system (PTS). HprK/P also catalyzes the pyrophosphate-producing, inorganic phosphate-dependent dephosphorylation (phosphorolysis) of seryl-phosphorylated HPr (P-Ser-HPr). The two antagonistic activities of HprK/P are regulated by several intracellular metabolites, which change their concentration in response to the absence or presence of rapidly metabolisable carbon sources (glucose, fructose, etc.) in the growth medium. Therefore, by controlling the phosphorylation state of HPr, HPrK/P is a sensor enzyme that plays a major role in the regulation of carbon metabolism and sugar transport: it mediates carbon catabolite repression (CCR), and regulates PTS-catalyzed carbohydrate uptake and inducer exclusion. This chain is HPr kinase/phosphorylase, found in Streptococcus thermophilus (strain ATCC BAA-250 / LMG 18311).